We begin with the raw amino-acid sequence, 182 residues long: ADP-ribosylation factor-like protein 3 (182 aa).

The N-myristoyl glycine moiety is linked to residue Gly-2. The residue at position 5 (Ser-5) is a Phosphoserine. GTP-binding positions include 24–31 (GLDNAGKT), Thr-48, 67–71 (DIGGQ), Gly-70, 126–129 (NKQD), and 159–161 (SAL). Positions 31 and 48 each coordinate Mg(2+).

Belongs to the small GTPase superfamily. Arf family. Found in a complex with ARL3, RP2 and UNC119 (or UNC119B); RP2 induces hydrolysis of GTP ARL3 in the complex, leading to the release of UNC119 (or UNC119B). Interacts with RP2; interaction is direct and stimulated with the activated GTP-bound form of ARL3. Interacts with SYS1. The GTP-bound form interacts with ARL2BP and PDE6D. Microtubule-associated protein. May interact with GOLGA4. Interacts with GGA1; the interaction recruits PKD1:PKD2 complex to trans-Golgi network and is required for ciliary targeting of PKD1:PKD2 complex. Interacts with DNAAF9. As to expression, expressed in the retina. Strongly expressed in connecting cilium, the myoid region of the inner segments (IS) and in cone photoreceptors (at protein level).

The protein resides in the golgi apparatus membrane. It localises to the cytoplasm. Its subcellular location is the cytoskeleton. The protein localises to the spindle. It is found in the nucleus. The protein resides in the microtubule organizing center. It localises to the centrosome. Its subcellular location is the cell projection. The protein localises to the cilium. In terms of biological role, small GTP-binding protein which cycles between an inactive GDP-bound and an active GTP-bound form, and the rate of cycling is regulated by guanine nucleotide exchange factors (GEF) and GTPase-activating proteins (GAP). Required for normal cytokinesis and cilia signaling. Requires assistance from GTPase-activating proteins (GAPs) like RP2 and PDE6D, in order to cycle between inactive GDP-bound and active GTP-bound forms. Required for targeting proteins to the cilium, including myristoylated NPHP3 and prenylated INPP5E. Targets NPHP3 to the ciliary membrane by releasing myristoylated NPHP3 from UNC119B cargo adapter into the cilium. Required for PKD1:PKD2 complex targeting from the trans-Golgi network to the cilium. The sequence is that of ADP-ribosylation factor-like protein 3 (ARL3) from Homo sapiens (Human).